We begin with the raw amino-acid sequence, 224 residues long: Urease accessory protein UreF (224 aa).

This sequence belongs to the UreF family. In terms of assembly, ureD, UreF and UreG form a complex that acts as a GTP-hydrolysis-dependent molecular chaperone, activating the urease apoprotein by helping to assemble the nickel containing metallocenter of UreC. The UreE protein probably delivers the nickel.

It is found in the cytoplasm. Its function is as follows. Required for maturation of urease via the functional incorporation of the urease nickel metallocenter. The polypeptide is Urease accessory protein UreF (Pseudomonas putida (strain ATCC 47054 / DSM 6125 / CFBP 8728 / NCIMB 11950 / KT2440)).